The sequence spans 236 residues: Small ribosomal subunit protein uS3 (236 aa).

The KH type-2 domain occupies 39–107 (IREFLTEELK…DTSLNIVEVR (69 aa)). The tract at residues 214 to 236 (ASERRAVEGDNQGSSSNRRRENA) is disordered.

The protein belongs to the universal ribosomal protein uS3 family. In terms of assembly, part of the 30S ribosomal subunit. Forms a tight complex with proteins S10 and S14.

Functionally, binds the lower part of the 30S subunit head. Binds mRNA in the 70S ribosome, positioning it for translation. The polypeptide is Small ribosomal subunit protein uS3 (Brucella anthropi (strain ATCC 49188 / DSM 6882 / CCUG 24695 / JCM 21032 / LMG 3331 / NBRC 15819 / NCTC 12168 / Alc 37) (Ochrobactrum anthropi)).